We begin with the raw amino-acid sequence, 171 residues long: MDIRSHIRTVPDFPKPGILFYDISTLLAHAEAWKATVEKLAEAVAPHKPDLLVGIESRGFLVAAPLSLALGCGFAMVRKKGKLPGQTIRYTYDLEYGTDTVEIQADAIAPGQRVVVLDDLLATGGTMAAAIHLLRSVGADVTAAAFIMELAFLNGRDRLDVPAEVLISYES.

Belongs to the purine/pyrimidine phosphoribosyltransferase family. As to quaternary structure, homodimer.

The protein localises to the cytoplasm. It catalyses the reaction AMP + diphosphate = 5-phospho-alpha-D-ribose 1-diphosphate + adenine. It participates in purine metabolism; AMP biosynthesis via salvage pathway; AMP from adenine: step 1/1. Functionally, catalyzes a salvage reaction resulting in the formation of AMP, that is energically less costly than de novo synthesis. This is Adenine phosphoribosyltransferase from Rhodospirillum centenum (strain ATCC 51521 / SW).